Reading from the N-terminus, the 121-residue chain is MKKNTNFTQINNNFYRLVDDLFLKIEDNLNFYDDKIDIDYEVQDYVMTITFLNKSIIVVNKQESLRQIWLATKFNAYHFNYKIDKWICNRSNKDFWEIFEKSCSIQSNENLIFTAFKRIKK.

Belongs to the frataxin family.

Involved in iron-sulfur (Fe-S) cluster assembly. May act as a regulator of Fe-S biogenesis. This chain is Iron-sulfur cluster assembly protein CyaY, found in Buchnera aphidicola subsp. Schizaphis graminum (strain Sg).